Here is a 207-residue protein sequence, read N- to C-terminus: ATP-dependent Clp protease proteolytic subunit 2 (207 aa).

Catalysis depends on serine 102, which acts as the Nucleophile. Histidine 127 is an active-site residue.

This sequence belongs to the peptidase S14 family. Fourteen ClpP subunits assemble into 2 heptameric rings which stack back to back to give a disk-like structure with a central cavity, resembling the structure of eukaryotic proteasomes.

The protein resides in the cytoplasm. The enzyme catalyses Hydrolysis of proteins to small peptides in the presence of ATP and magnesium. alpha-casein is the usual test substrate. In the absence of ATP, only oligopeptides shorter than five residues are hydrolyzed (such as succinyl-Leu-Tyr-|-NHMec, and Leu-Tyr-Leu-|-Tyr-Trp, in which cleavage of the -Tyr-|-Leu- and -Tyr-|-Trp bonds also occurs).. Its function is as follows. Cleaves peptides in various proteins in a process that requires ATP hydrolysis. Has a chymotrypsin-like activity. Plays a major role in the degradation of misfolded proteins. In Bifidobacterium longum (strain NCC 2705), this protein is ATP-dependent Clp protease proteolytic subunit 2.